The chain runs to 212 residues: MSTSASGPEHEFVSKFLTLATLTEPKLPKSYTKPLKDVTNLGVPLPTLKYKYKQNRAKKLKLHQDQQGQDNAAVHLTLKKIQAPKFSIEHDFSPSDTILQIKQHLISEEKASHISEIKLLLKGKVLHDNLFLSDLKVTPANSTITVMIKPNPTISKEPEAEKSTNSPAPAPPQELTVPWDDIEALLKNNFENDQAAVRQVMERLQKGWSLAK.

A Ubiquitin-like domain is found at 74–152 (VHLTLKKIQA…TITVMIKPNP (79 aa)). Residues 150-177 (PNPTISKEPEAEKSTNSPAPAPPQELTV) form a disordered region.

Interacts with GET4.

Its subcellular location is the cytoplasm. The protein localises to the cytosol. It localises to the nucleus. Functionally, required for efficient mating. Involved in the production of alpha-factor, the KAR9 and TUB1 location to the shmoo tip and nuclear migration into pheromone-induced shmoos. This chain is Ubiquitin-like protein MDY2 (MDY2), found in Saccharomyces cerevisiae (strain ATCC 204508 / S288c) (Baker's yeast).